Reading from the N-terminus, the 124-residue chain is NAD(P)H-quinone oxidoreductase subunit 5, chloroplastic (124 aa).

A run of 3 helical transmembrane segments spans residues 22–42 (TPIS…FLVA), 44–64 (LLPL…IGII), and 91–111 (LGYM…FHLI).

Belongs to the complex I subunit 5 family. In terms of assembly, NDH is composed of at least 16 different subunits, 5 of which are encoded in the nucleus.

Its subcellular location is the plastid. The protein resides in the chloroplast thylakoid membrane. The enzyme catalyses a plastoquinone + NADH + (n+1) H(+)(in) = a plastoquinol + NAD(+) + n H(+)(out). It catalyses the reaction a plastoquinone + NADPH + (n+1) H(+)(in) = a plastoquinol + NADP(+) + n H(+)(out). Functionally, NDH shuttles electrons from NAD(P)H:plastoquinone, via FMN and iron-sulfur (Fe-S) centers, to quinones in the photosynthetic chain and possibly in a chloroplast respiratory chain. The immediate electron acceptor for the enzyme in this species is believed to be plastoquinone. Couples the redox reaction to proton translocation, and thus conserves the redox energy in a proton gradient. This chain is NAD(P)H-quinone oxidoreductase subunit 5, chloroplastic (ndhF), found in Pisum sativum (Garden pea).